We begin with the raw amino-acid sequence, 267 residues long: Protein TIFY 7 (267 aa).

The 36-residue stretch at 113–148 folds into the Tify domain; that stretch reads SSGSSPQLTIFYGGTISVFNDISPDKAQAIMLCAGN. A Jas motif is present at residues 220-244; the sequence is PQARKASLARFLEKRKERLMSAMPY. Positions 222 to 229 match the Nuclear localization signal motif; sequence ARKASLAR.

Belongs to the TIFY/JAZ family. In terms of assembly, homo- and heterodimer. Interacts with MYC2, MYC3, MYC4, COI1, AFPH2/NINJA, TIFY10A/JAZ1, TIFY10B/JAZ2, TIFY6B/JAZ3, TIFY5A/JAZ8, TIFY9/JAZ10 and TIFY3A/JAZ11. Interacts with RHD6 and RSL1. In terms of processing, ubiquitinated. Targeted for degradation by the SCF(COI1) E3 ubiquitin ligase-proteasome pathway during jasmonate signaling.

Its subcellular location is the nucleus. Functionally, repressor of jasmonate responses. Jasmonoyl-isoleucine (JA-Ile) specifically promotes COI1-TIFY7/JAZ9 interaction. Interacts with and suppresses RHD6 and RSL1 transcription factor activities to negatively regulate jasmonate-stimulated root hair development. In Arabidopsis thaliana (Mouse-ear cress), this protein is Protein TIFY 7 (TIFY7).